The chain runs to 164 residues: Phosphopantetheine adenylyltransferase (164 aa).

Substrate is bound at residue Thr14. ATP is bound by residues 14–15 (TF) and His22. Residues Lys46, Met78, and Arg92 each coordinate substrate. Residues 93-95 (GLR), Glu103, and 128-134 (HAFISST) contribute to the ATP site.

Belongs to the bacterial CoaD family. As to quaternary structure, homohexamer. Mg(2+) is required as a cofactor.

Its subcellular location is the cytoplasm. The enzyme catalyses (R)-4'-phosphopantetheine + ATP + H(+) = 3'-dephospho-CoA + diphosphate. Its pathway is cofactor biosynthesis; coenzyme A biosynthesis; CoA from (R)-pantothenate: step 4/5. Reversibly transfers an adenylyl group from ATP to 4'-phosphopantetheine, yielding dephospho-CoA (dPCoA) and pyrophosphate. This Vibrio vulnificus (strain CMCP6) protein is Phosphopantetheine adenylyltransferase.